Reading from the N-terminus, the 381-residue chain is Succinate--CoA ligase [ADP-forming] subunit beta (381 aa).

An ATP-grasp domain is found at 9-236 (KELLRVAGVP…ESSEAPSEVD (228 aa)). Residues Lys-45, 52 to 54 (GRG), Ala-94, and Glu-99 each bind ATP. Asn-191 and Asp-205 together coordinate Mg(2+). Residues Asn-256 and 313-315 (GIT) each bind substrate.

The protein belongs to the succinate/malate CoA ligase beta subunit family. As to quaternary structure, heterotetramer of two alpha and two beta subunits. Mg(2+) serves as cofactor.

It carries out the reaction succinate + ATP + CoA = succinyl-CoA + ADP + phosphate. The enzyme catalyses GTP + succinate + CoA = succinyl-CoA + GDP + phosphate. It participates in carbohydrate metabolism; tricarboxylic acid cycle; succinate from succinyl-CoA (ligase route): step 1/1. Succinyl-CoA synthetase functions in the citric acid cycle (TCA), coupling the hydrolysis of succinyl-CoA to the synthesis of either ATP or GTP and thus represents the only step of substrate-level phosphorylation in the TCA. The beta subunit provides nucleotide specificity of the enzyme and binds the substrate succinate, while the binding sites for coenzyme A and phosphate are found in the alpha subunit. This Gemmatimonas aurantiaca (strain DSM 14586 / JCM 11422 / NBRC 100505 / T-27) protein is Succinate--CoA ligase [ADP-forming] subunit beta.